A 455-amino-acid chain; its full sequence is Bifunctional protein GlmU (455 aa).

The segment at 1-227 (MGLSVIILAA…CEEVQGVNDR (227 aa)) is pyrophosphorylase. Residues 8 to 11 (LAAG), K22, Q73, 78 to 79 (GT), 100 to 102 (YGD), G137, E152, N167, and N225 contribute to the UDP-N-acetyl-alpha-D-glucosamine site. D102 contributes to the Mg(2+) binding site. N225 lines the Mg(2+) pocket. The interval 228–248 (WELTKLERYYQRLMAKKLSLA) is linker. Positions 249 to 455 (GVTIIDPERF…KGWHRPTKKE (207 aa)) are N-acetyltransferase. UDP-N-acetyl-alpha-D-glucosamine-binding residues include R332 and K350. The active-site Proton acceptor is the H362. Positions 365 and 376 each coordinate UDP-N-acetyl-alpha-D-glucosamine. Acetyl-CoA-binding positions include A379, 385–386 (NY), S404, A422, and R439.

The protein in the N-terminal section; belongs to the N-acetylglucosamine-1-phosphate uridyltransferase family. This sequence in the C-terminal section; belongs to the transferase hexapeptide repeat family. Homotrimer. Requires Mg(2+) as cofactor.

The protein resides in the cytoplasm. It catalyses the reaction alpha-D-glucosamine 1-phosphate + acetyl-CoA = N-acetyl-alpha-D-glucosamine 1-phosphate + CoA + H(+). The catalysed reaction is N-acetyl-alpha-D-glucosamine 1-phosphate + UTP + H(+) = UDP-N-acetyl-alpha-D-glucosamine + diphosphate. The protein operates within nucleotide-sugar biosynthesis; UDP-N-acetyl-alpha-D-glucosamine biosynthesis; N-acetyl-alpha-D-glucosamine 1-phosphate from alpha-D-glucosamine 6-phosphate (route II): step 2/2. It participates in nucleotide-sugar biosynthesis; UDP-N-acetyl-alpha-D-glucosamine biosynthesis; UDP-N-acetyl-alpha-D-glucosamine from N-acetyl-alpha-D-glucosamine 1-phosphate: step 1/1. Its pathway is bacterial outer membrane biogenesis; LPS lipid A biosynthesis. Its function is as follows. Catalyzes the last two sequential reactions in the de novo biosynthetic pathway for UDP-N-acetylglucosamine (UDP-GlcNAc). The C-terminal domain catalyzes the transfer of acetyl group from acetyl coenzyme A to glucosamine-1-phosphate (GlcN-1-P) to produce N-acetylglucosamine-1-phosphate (GlcNAc-1-P), which is converted into UDP-GlcNAc by the transfer of uridine 5-monophosphate (from uridine 5-triphosphate), a reaction catalyzed by the N-terminal domain. The protein is Bifunctional protein GlmU of Coxiella burnetii (strain RSA 493 / Nine Mile phase I).